A 72-amino-acid polypeptide reads, in one-letter code: NAD(P)H-quinone oxidoreductase subunit O (72 aa).

This sequence belongs to the complex I NdhO subunit family. In terms of assembly, NDH-1 can be composed of about 15 different subunits; different subcomplexes with different compositions have been identified which probably have different functions.

The protein localises to the cellular thylakoid membrane. It carries out the reaction a plastoquinone + NADH + (n+1) H(+)(in) = a plastoquinol + NAD(+) + n H(+)(out). The catalysed reaction is a plastoquinone + NADPH + (n+1) H(+)(in) = a plastoquinol + NADP(+) + n H(+)(out). NDH-1 shuttles electrons from an unknown electron donor, via FMN and iron-sulfur (Fe-S) centers, to quinones in the respiratory and/or the photosynthetic chain. The immediate electron acceptor for the enzyme in this species is believed to be plastoquinone. Couples the redox reaction to proton translocation, and thus conserves the redox energy in a proton gradient. Cyanobacterial NDH-1 also plays a role in inorganic carbon-concentration. This is NAD(P)H-quinone oxidoreductase subunit O from Synechococcus elongatus (strain ATCC 33912 / PCC 7942 / FACHB-805) (Anacystis nidulans R2).